A 668-amino-acid polypeptide reads, in one-letter code: Tastin (668 aa).

3 disordered regions span residues 1 to 102 (MTTL…GGSN), 154 to 177 (ERKG…PRIP), and 189 to 285 (FSRL…GRHH). S16 is modified (phosphoserine). 2 stretches are compositionally biased toward polar residues: residues 27–37 (QRCQDFSSVKS) and 55–64 (PRSTQRQRPL). S97 bears the Phosphoserine mark. Residues 158-168 (GTTQRGQSARS) show a composition bias toward polar residues. S169 carries the post-translational modification Phosphoserine. Basic and acidic residues-rich tracts occupy residues 227–246 (ELRR…DRRT) and 269–282 (GEQE…DGGG). 3 positions are modified to phosphoserine: S306, S324, and S338. 2 disordered regions span residues 364–392 (ITLQ…HQEL) and 462–502 (TEPL…AEPE).

As to quaternary structure, directly binds bystin, and indirectly trophinin.

The protein localises to the cytoplasm. In terms of biological role, could be involved with bystin and trophinin in a cell adhesion molecule complex that mediates an initial attachment of the blastocyst to uterine epithelial cells at the time of the embryo implantation. The chain is Tastin from Mus musculus (Mouse).